An 88-amino-acid chain; its full sequence is Small ribosomal subunit protein bS20 (88 aa).

Residues 69 to 88 form a disordered region; sequence KNTASRKKSRLTKRFNKLTG. The span at 71-88 shows a compositional bias: basic residues; it reads TASRKKSRLTKRFNKLTG.

The protein belongs to the bacterial ribosomal protein bS20 family.

Binds directly to 16S ribosomal RNA. The polypeptide is Small ribosomal subunit protein bS20 (Pelotomaculum thermopropionicum (strain DSM 13744 / JCM 10971 / SI)).